Consider the following 469-residue polypeptide: Cyclin-dependent kinase 14 (469 aa).

3 positions are modified to phosphoserine: Ser-24, Ser-78, and Ser-95. The interval 103-133 is disordered; that stretch reads FKSSSAGKESPKVRRHSSPSSPTSPKFGKAD. Residue Ser-134 is modified to Phosphoserine. The 285-residue stretch at 135 to 419 folds into the Protein kinase domain; sequence YEKLEKLGEG…AQAALSHEYF (285 aa). Residues 141-149 and Lys-164 contribute to the ATP site; that span reads LGEGSYATV. Asp-256 acts as the Proton acceptor in catalysis. The interval 449-469 is disordered; sequence ESMRAFGKNNSYGKSLSNSKH. The segment covering 456-469 has biased composition (polar residues); the sequence is KNNSYGKSLSNSKH.

It belongs to the protein kinase superfamily. CMGC Ser/Thr protein kinase family. CDC2/CDKX subfamily. Found in a complex with LRP6, CCNY and CAPRIN2 during G2/M stage; CAPRIN2 functions as a scaffold for the complex by binding to CCNY via its N terminus and to CDK14 via its C terminus. Interacts with CCNY; CCNY mediates its recruitment to the plasma membrane and promotes phosphorylation of LRP6. Interacts with CCDN3 and CDKN1A. Interacts with SEPT8. Interacts with 14-3-3 proteina YWHAB, YWHAE, YWHAH and YWHAQ. In terms of tissue distribution, in the adult, widely expressed at low levels except in brain, kidney and testis where expression is high. In the brain, detected in cortex, hippocampus, dentate gyrus, amygdala cortex, parasubiculum and cerebellum. In the embryo, expressed predominantly in the nervous system.

The protein resides in the cell membrane. The protein localises to the cytoplasm. Its subcellular location is the nucleus. The enzyme catalyses L-seryl-[protein] + ATP = O-phospho-L-seryl-[protein] + ADP + H(+). It carries out the reaction L-threonyl-[protein] + ATP = O-phospho-L-threonyl-[protein] + ADP + H(+). With respect to regulation, serine/threonine-protein kinase activity is promoted by associated cyclins CCDN3 and CCNY and repressed by CDKN1A. Functionally, serine/threonine-protein kinase involved in the control of the eukaryotic cell cycle, whose activity is controlled by an associated cyclin. Acts as a cell-cycle regulator of Wnt signaling pathway during G2/M phase by mediating the phosphorylation of LRP6 at 'Ser-1490', leading to the activation of the Wnt signaling pathway. Acts as a regulator of cell cycle progression and cell proliferation via its interaction with CCDN3. Phosphorylates RB1 in vitro, however the relevance of such result remains to be confirmed in vivo. May also play a role in meiosis, neuron differentiation and may indirectly act as a negative regulator of insulin-responsive glucose transport. This Mus musculus (Mouse) protein is Cyclin-dependent kinase 14 (Cdk14).